The chain runs to 101 residues: Large ribosomal subunit protein uL23c (101 aa).

Belongs to the universal ribosomal protein uL23 family. Part of the 50S ribosomal subunit.

The protein localises to the plastid. The protein resides in the chloroplast. Functionally, binds to 23S rRNA. In Cyanidium caldarium (Red alga), this protein is Large ribosomal subunit protein uL23c (rpl23).